The primary structure comprises 372 residues: Heat-inducible transcription repressor HrcA (372 aa).

It belongs to the HrcA family.

In terms of biological role, negative regulator of class I heat shock genes (grpE-dnaK-dnaJ and groELS operons). Prevents heat-shock induction of these operons. This Chloroflexus aurantiacus (strain ATCC 29366 / DSM 635 / J-10-fl) protein is Heat-inducible transcription repressor HrcA.